The sequence spans 185 residues: Ribosome-recycling factor (185 aa).

The protein belongs to the RRF family.

The protein resides in the cytoplasm. Functionally, responsible for the release of ribosomes from messenger RNA at the termination of protein biosynthesis. May increase the efficiency of translation by recycling ribosomes from one round of translation to another. The chain is Ribosome-recycling factor from Rhodococcus erythropolis (strain PR4 / NBRC 100887).